A 333-amino-acid chain; its full sequence is Holliday junction branch migration complex subunit RuvB (333 aa).

The tract at residues 1-182 is large ATPase domain (RuvB-L); the sequence is MEERMVSAEA…FGVMARLEYY (182 aa). Residues Ile21, Arg22, Gly63, Lys66, Thr67, Thr68, 129-131, Arg172, Tyr182, and Arg219 contribute to the ATP site; that span reads EDY. Residue Thr67 participates in Mg(2+) binding. The interval 183 to 253 is small ATPAse domain (RuvB-S); that stretch reads NVEELTTIIE…RAIESLERLQ (71 aa). The interval 256-333 is head domain (RuvB-H); that stretch reads RLGLDHIDHK…EHFNMEVPNK (78 aa). DNA contacts are provided by Arg311 and Arg316.

It belongs to the RuvB family. In terms of assembly, homohexamer. Forms an RuvA(8)-RuvB(12)-Holliday junction (HJ) complex. HJ DNA is sandwiched between 2 RuvA tetramers; dsDNA enters through RuvA and exits via RuvB. An RuvB hexamer assembles on each DNA strand where it exits the tetramer. Each RuvB hexamer is contacted by two RuvA subunits (via domain III) on 2 adjacent RuvB subunits; this complex drives branch migration. In the full resolvosome a probable DNA-RuvA(4)-RuvB(12)-RuvC(2) complex forms which resolves the HJ.

The protein localises to the cytoplasm. The catalysed reaction is ATP + H2O = ADP + phosphate + H(+). Functionally, the RuvA-RuvB-RuvC complex processes Holliday junction (HJ) DNA during genetic recombination and DNA repair, while the RuvA-RuvB complex plays an important role in the rescue of blocked DNA replication forks via replication fork reversal (RFR). RuvA specifically binds to HJ cruciform DNA, conferring on it an open structure. The RuvB hexamer acts as an ATP-dependent pump, pulling dsDNA into and through the RuvAB complex. RuvB forms 2 homohexamers on either side of HJ DNA bound by 1 or 2 RuvA tetramers; 4 subunits per hexamer contact DNA at a time. Coordinated motions by a converter formed by DNA-disengaged RuvB subunits stimulates ATP hydrolysis and nucleotide exchange. Immobilization of the converter enables RuvB to convert the ATP-contained energy into a lever motion, pulling 2 nucleotides of DNA out of the RuvA tetramer per ATP hydrolyzed, thus driving DNA branch migration. The RuvB motors rotate together with the DNA substrate, which together with the progressing nucleotide cycle form the mechanistic basis for DNA recombination by continuous HJ branch migration. Branch migration allows RuvC to scan DNA until it finds its consensus sequence, where it cleaves and resolves cruciform DNA. In Halalkalibacterium halodurans (strain ATCC BAA-125 / DSM 18197 / FERM 7344 / JCM 9153 / C-125) (Bacillus halodurans), this protein is Holliday junction branch migration complex subunit RuvB.